A 438-amino-acid chain; its full sequence is uncharacterized protein (438 aa).

Disordered regions lie at residues 1–22 and 156–264; these read MRDNTAKGITAGSGSQQTTYDP and DTAK…PWRP. Over residues 156 to 170 the composition is skewed to basic and acidic residues; it reads DTAKSNEKLQGDESK. The span at 171 to 189 shows a compositional bias: low complexity; it reads SSNGSSSTSTTTQRGSTNS. A compositionally biased stretch (basic and acidic residues) spans 191–206; it reads TKVKALKIEVKKKSDS.

Belongs to the adhesin P1 family.

This is an uncharacterized protein from Mycoplasma pneumoniae (strain ATCC 29342 / M129 / Subtype 1) (Mycoplasmoides pneumoniae).